Consider the following 217-residue polypeptide: Small ribosomal subunit protein eS6 (217 aa).

It belongs to the eukaryotic ribosomal protein eS6 family. In terms of processing, phosphorylated.

The sequence is that of Small ribosomal subunit protein eS6 (RPS6) from Encephalitozoon cuniculi (strain GB-M1) (Microsporidian parasite).